Here is a 53-residue protein sequence, read N- to C-terminus: Sec-independent protein translocase protein TatA (53 aa).

Residues 1–21 (MGMSFSHLLIVLLIIFVLFGA) form a helical membrane-spanning segment.

It belongs to the TatA/E family. As to quaternary structure, the Tat system comprises two distinct complexes: a TatABC complex, containing multiple copies of TatA, TatB and TatC subunits, and a separate TatA complex, containing only TatA subunits. Substrates initially bind to the TatABC complex, which probably triggers association of the separate TatA complex to form the active translocon.

It is found in the cell inner membrane. Part of the twin-arginine translocation (Tat) system that transports large folded proteins containing a characteristic twin-arginine motif in their signal peptide across membranes. TatA could form the protein-conducting channel of the Tat system. This chain is Sec-independent protein translocase protein TatA, found in Rickettsia typhi (strain ATCC VR-144 / Wilmington).